Reading from the N-terminus, the 344-residue chain is Holliday junction branch migration complex subunit RuvB (344 aa).

A compositionally biased stretch (low complexity) spans 1–10; that stretch reads MAIQSSSSGS. The interval 1-37 is disordered; it reads MAIQSSSSGSKPPAPKRLVAPEATAAEGDGGRDEGLR. Residues 13-197 are large ATPase domain (RuvB-L); that stretch reads PAPKRLVAPE…FGLIQRLEFY (185 aa). Residues leucine 36, arginine 37, glycine 78, lysine 81, threonine 82, threonine 83, 144–146, arginine 187, tyrosine 197, and arginine 234 each bind ATP; that span reads EDF. Residue threonine 82 participates in Mg(2+) binding. Residues 198-268 are small ATPAse domain (RuvB-S); that stretch reads SCSDLEAIVS…VVVEALAMHR (71 aa). The interval 271 to 344 is head domain (RuvB-H); sequence GRGLDPSDRR…DAGRAHLEAA (74 aa). Positions 326 and 331 each coordinate DNA.

It belongs to the RuvB family. In terms of assembly, homohexamer. Forms an RuvA(8)-RuvB(12)-Holliday junction (HJ) complex. HJ DNA is sandwiched between 2 RuvA tetramers; dsDNA enters through RuvA and exits via RuvB. An RuvB hexamer assembles on each DNA strand where it exits the tetramer. Each RuvB hexamer is contacted by two RuvA subunits (via domain III) on 2 adjacent RuvB subunits; this complex drives branch migration. In the full resolvosome a probable DNA-RuvA(4)-RuvB(12)-RuvC(2) complex forms which resolves the HJ.

The protein localises to the cytoplasm. The enzyme catalyses ATP + H2O = ADP + phosphate + H(+). Its function is as follows. The RuvA-RuvB-RuvC complex processes Holliday junction (HJ) DNA during genetic recombination and DNA repair, while the RuvA-RuvB complex plays an important role in the rescue of blocked DNA replication forks via replication fork reversal (RFR). RuvA specifically binds to HJ cruciform DNA, conferring on it an open structure. The RuvB hexamer acts as an ATP-dependent pump, pulling dsDNA into and through the RuvAB complex. RuvB forms 2 homohexamers on either side of HJ DNA bound by 1 or 2 RuvA tetramers; 4 subunits per hexamer contact DNA at a time. Coordinated motions by a converter formed by DNA-disengaged RuvB subunits stimulates ATP hydrolysis and nucleotide exchange. Immobilization of the converter enables RuvB to convert the ATP-contained energy into a lever motion, pulling 2 nucleotides of DNA out of the RuvA tetramer per ATP hydrolyzed, thus driving DNA branch migration. The RuvB motors rotate together with the DNA substrate, which together with the progressing nucleotide cycle form the mechanistic basis for DNA recombination by continuous HJ branch migration. Branch migration allows RuvC to scan DNA until it finds its consensus sequence, where it cleaves and resolves cruciform DNA. The polypeptide is Holliday junction branch migration complex subunit RuvB (Synechococcus sp. (strain RCC307)).